Here is a 62-residue protein sequence, read N- to C-terminus: MGIDKRAEATAKDVQGKAQEAWGDLTDDPKLELEGKAKQVEASAEHKKEDLKDQAHRTIDNV.

Composition is skewed to basic and acidic residues over residues 1–15 (MGID…KDVQ) and 27–62 (DDPK…IDNV). The segment at 1–62 (MGIDKRAEAT…DQAHRTIDNV (62 aa)) is disordered.

The protein belongs to the UPF0337 (CsbD) family.

The protein is UPF0337 protein gsr0040 of Gloeobacter violaceus (strain ATCC 29082 / PCC 7421).